A 156-amino-acid polypeptide reads, in one-letter code: Small ribosomal subunit protein uS7 (156 aa).

It belongs to the universal ribosomal protein uS7 family. As to quaternary structure, part of the 30S ribosomal subunit. Contacts proteins S9 and S11.

Its function is as follows. One of the primary rRNA binding proteins, it binds directly to 16S rRNA where it nucleates assembly of the head domain of the 30S subunit. Is located at the subunit interface close to the decoding center, probably blocks exit of the E-site tRNA. The protein is Small ribosomal subunit protein uS7 of Baumannia cicadellinicola subsp. Homalodisca coagulata.